The sequence spans 266 residues: Undecaprenyl-diphosphatase (266 aa).

8 helical membrane passes run 1 to 21 (MDTFQVIILALIQGLTEFLPI), 39 to 59 (QGLSFDVAVNTGSLLAVVMYF), 87 to 107 (WWIILATIPAVIVGFTAKGFI), 111 to 131 (LRNIEVIAATTIIFGLLLWWA), 144 to 164 (VGWKKALVIGLAQAMALIPGT), 183 to 203 (AAARFSFLMSVPVSLGAAILV), 218 to 238 (ALGLGIVVSFIAAYVCIHYFL), and 246 to 266 (MTPFVIYRLVLGAVLCGFIFL).

It belongs to the UppP family.

It localises to the cell inner membrane. It catalyses the reaction di-trans,octa-cis-undecaprenyl diphosphate + H2O = di-trans,octa-cis-undecaprenyl phosphate + phosphate + H(+). Functionally, catalyzes the dephosphorylation of undecaprenyl diphosphate (UPP). Confers resistance to bacitracin. This chain is Undecaprenyl-diphosphatase, found in Shewanella piezotolerans (strain WP3 / JCM 13877).